A 518-amino-acid chain; its full sequence is Integrator complex subunit 14 (518 aa).

Residues 2–204 form the VWFA domain; it reads PTVVVMDVSL…KNVQSMFGKL (203 aa). 3 residues coordinate Mg(2+): Ser-10, Ser-12, and Thr-86. Position 418 is an N6-acetyllysine (Lys-418).

This sequence belongs to the Integrator subunit 14 family. As to quaternary structure, component of the Integrator complex, composed of core subunits INTS1, INTS2, INTS3, INTS4, INTS5, INTS6, INTS7, INTS8, INTS9/RC74, INTS10, INTS11/CPSF3L, INTS12, INTS13, INTS14 and INTS15. The core complex associates with protein phosphatase 2A subunits PPP2CA and PPP2R1A, to form the Integrator-PP2A (INTAC) complex. INTS14 is part of the tail subcomplex, composed of INTS10, INTS13, INTS14 and INTS15. As to expression, strongly expressed in numerous cancer cells compared with their non-cancerous counterparts (lung, prostate, colon, stomach and skin).

The protein localises to the nucleus. Functionally, component of the integrator complex, a multiprotein complex that terminates RNA polymerase II (Pol II) transcription in the promoter-proximal region of genes. The integrator complex provides a quality checkpoint during transcription elongation by driving premature transcription termination of transcripts that are unfavorably configured for transcriptional elongation: the complex terminates transcription by (1) catalyzing dephosphorylation of the C-terminal domain (CTD) of Pol II subunit POLR2A/RPB1 and SUPT5H/SPT5, (2) degrading the exiting nascent RNA transcript via endonuclease activity and (3) promoting the release of Pol II from bound DNA. The integrator complex is also involved in terminating the synthesis of non-coding Pol II transcripts, such as enhancer RNAs (eRNAs), small nuclear RNAs (snRNAs), telomerase RNAs and long non-coding RNAs (lncRNAs). Within the integrator complex, INTS14 is part of the integrator tail module that acts as a platform for the recruitment of transcription factors at promoters. The chain is Integrator complex subunit 14 from Homo sapiens (Human).